A 218-amino-acid polypeptide reads, in one-letter code: Dual specificity protein phosphatase TpbA (218 aa).

The N-terminal stretch at 1-28 (MHRSPLAWLRLLLAAVLGAFLLGGPLHA) is a signal peptide. The Tyrosine-protein phosphatase domain occupies 44-188 (DPSINLYRMS…YVRGADVDGL (145 aa)). The active-site Proton donor/acceptor is aspartate 105. Cysteine 132 acts as the Phosphocysteine intermediate in catalysis.

Belongs to the protein-tyrosine phosphatase family. In terms of assembly, monomer in solution.

The protein localises to the periplasm. The enzyme catalyses O-phospho-L-tyrosyl-[protein] + H2O = L-tyrosyl-[protein] + phosphate. It carries out the reaction O-phospho-L-threonyl-[protein] + H2O = L-threonyl-[protein] + phosphate. The catalysed reaction is O-phospho-L-seryl-[protein] + H2O = L-seryl-[protein] + phosphate. The phosphatase activity is completely inhibited by trisodium orthovanadate, a tyrosine phosphatase specific inhibitor. Its function is as follows. Phosphatase that regulates diverse phenotypes in P.aeruginosa via regulation of the concentration of cellular c-di-GMP. Acts by dephosphorylating the membrane-anchored diguanylate cyclase TpbB at tyrosine and serine/threonine sites, leading to inactivation of TpbB and reduced c-di-GMP production. The reduced cellular c-di-GMP concentration leads to reduced adhesin expression, reduced extracellular polysaccharide (EPS) production, pellicule production, cell aggregation and biofilm formation, and enhanced swimming and swarming. It affects colony morphology and controls rugose colony formation. TpbA also acts as a positive regulator of extracellular DNA (eDNA, a major component of the biofilm matrix) and cell lysis by reducing c-di-GMP concentrations. In vitro shows phosphatase activity toward p-nitrophenyl phosphate (pNPP), tyrosine phosphopeptides and a threonine phosphopeptide. Does not have phosphodiesterases (PDE) activity, and cannot degrade c-di-GMP. The chain is Dual specificity protein phosphatase TpbA from Pseudomonas aeruginosa (strain UCBPP-PA14).